Reading from the N-terminus, the 406-residue chain is GTPase Obg (406 aa).

The Obg domain occupies 1–159; sequence MRFVDEAVIT…REIRLELKVL (159 aa). The interval 120-143 is disordered; it reads GGEGGLGNTHFKSSTNRAPRKCTT. One can recognise an OBG-type G domain in the interval 160 to 333; the sequence is ADVGLLGMPN…VVYYLMDQIE (174 aa). GTP is bound by residues 166 to 173, 191 to 195, 213 to 216, 283 to 286, and 314 to 316; these read GMPNAGKS, FTTMV, DIPG, NKLD, and SGL. Residues Ser-173 and Thr-193 each contribute to the Mg(2+) site. The interval 381–406 is disordered; the sequence is ESMMDDDDDFDDDEDDGDVESIYVRD. Over residues 383 to 399 the composition is skewed to acidic residues; the sequence is MMDDDDDFDDDEDDGDV.

This sequence belongs to the TRAFAC class OBG-HflX-like GTPase superfamily. OBG GTPase family. Monomer. It depends on Mg(2+) as a cofactor.

Its subcellular location is the cytoplasm. Functionally, an essential GTPase which binds GTP, GDP and possibly (p)ppGpp with moderate affinity, with high nucleotide exchange rates and a fairly low GTP hydrolysis rate. Plays a role in control of the cell cycle, stress response, ribosome biogenesis and in those bacteria that undergo differentiation, in morphogenesis control. The polypeptide is GTPase Obg (Acinetobacter baumannii (strain SDF)).